The primary structure comprises 130 residues: Small ribosomal subunit protein uS11c (130 aa).

Belongs to the universal ribosomal protein uS11 family. Part of the 30S ribosomal subunit.

The protein resides in the plastid. It is found in the chloroplast. The chain is Small ribosomal subunit protein uS11c from Phaeodactylum tricornutum (strain CCAP 1055/1).